Reading from the N-terminus, the 236-residue chain is Histone H1 (236 aa).

The span at 1-10 (MPPKKTETKA) shows a compositional bias: basic and acidic residues. Disordered stretches follow at residues 1-36 (MPPK…SPST) and 94-236 (KGVF…AEKA). Over residues 11–36 (ADASAAAAPAPAAAPTSAPKTKSPST) the composition is skewed to low complexity. In terms of domain architecture, H15 spans 36-111 (THASYLDMIT…GPSGGTKLAK (76 aa)). The segment covering 109-122 (LAKKVAKPAPKKAA) has biased composition (basic residues). A compositionally biased stretch (basic and acidic residues) spans 123–150 (PKKETKEKKPAAAKKEGAAKKETKEKKA). Residues 153–162 (AKKAAAPKKA) are compositionally biased toward low complexity. Positions 165 to 174 (PKKEVKEKKA) are enriched in basic and acidic residues. Residues 202 to 220 (AKSTAKPAAAKKAAAPKKA) are compositionally biased toward low complexity. Over residues 224 to 236 (KKAEKAEPAAEKA) the composition is skewed to basic and acidic residues.

It belongs to the histone H1/H5 family.

It localises to the nucleus. The protein resides in the chromosome. In terms of biological role, could act as an H1-type linker histone. The chain is Histone H1 (hH1) from Neurospora crassa (strain ATCC 24698 / 74-OR23-1A / CBS 708.71 / DSM 1257 / FGSC 987).